The following is a 236-amino-acid chain: DDCIVVEYYIVTDSAFTKRFKSNSALTKYVTVMFTGVQNLMDTLELGIGVRLLGVTAFNEETEPSFIIDNLISGPPEAFDPDVLITAMSEYYCNHQIGLAKNTDLIFLITARGMGDPREDGTVDINTAGIANSAGVYKPCLKAGVATDDSDYNERVDTLAHESVHLLGSPHDGEGPDQVSLEGSPGAANCPAKAGYIMGNRNDKNKYKFSPCTKKCVEYLLSKPAASCIFEQCSGF.

In terms of domain architecture, Peptidase M12B spans 4–232; that stretch reads IVVEYYIVTD…KPAASCIFEQ (229 aa). Residue His-161 participates in Zn(2+) binding. Glu-162 is a catalytic residue. Positions 165 and 171 each coordinate Zn(2+).

It belongs to the venom metalloproteinase (M12B) family. The cofactor is Zn(2+). In terms of processing, contains several disulfide bonds. In terms of tissue distribution, expressed by the venom gland.

The protein resides in the secreted. With respect to regulation, inhibited by EDTA. Acts as a metalloprotease. Penetrates intact tissue and specifically cleaves the vesicle-associated membrane protein 2 (VAMP2) (part of the SNARE complex) involved in pancreatic secretion, thus disrupting the normal vesicular traffic. The chain is Venom metalloproteinase antarease-like TfasMP_A from Tityus fasciolatus (Central Brazilian scorpion).